The following is a 66-amino-acid chain: Large ribosomal subunit protein bL33c (66 aa).

The protein belongs to the bacterial ribosomal protein bL33 family.

It is found in the plastid. The protein resides in the chloroplast. The sequence is that of Large ribosomal subunit protein bL33c (rpl33) from Arabidopsis thaliana (Mouse-ear cress).